The sequence spans 352 residues: Beta-1,4-xylanase (352 aa).

Residues 1–23 form the signal peptide; sequence MINQRFSILVLLLILLTFSLGFL. Positions 29–352 constitute a GH10 domain; the sequence is GMEIPSLKEV…KKAFWEIVKF (324 aa). The Proton donor role is filled by E155. The active-site Nucleophile is the E262.

It belongs to the glycosyl hydrolase 10 (cellulase F) family.

It localises to the secreted. It catalyses the reaction Endohydrolysis of (1-&gt;4)-beta-D-xylosidic linkages in xylans.. It functions in the pathway glycan degradation; xylan degradation. This is Beta-1,4-xylanase (xynA) from Dictyoglomus thermophilum.